A 94-amino-acid chain; its full sequence is Integration host factor subunit beta (94 aa).

It belongs to the bacterial histone-like protein family. Heterodimer of an alpha and a beta chain.

This protein is one of the two subunits of integration host factor, a specific DNA-binding protein that functions in genetic recombination as well as in transcriptional and translational control. The sequence is that of Integration host factor subunit beta from Buchnera aphidicola subsp. Acyrthosiphon pisum (strain 5A).